Here is a 1040-residue protein sequence, read N- to C-terminus: DNA mismatch repair protein MutS (1040 aa).

Polar residues predominate over residues 1 to 10 (MPVKPSAQNN). Disordered regions lie at residues 1–22 (MPVK…SVPV) and 130–157 (ATGT…SKST). The span at 11–22 (SPSKPTSKSVPV) shows a compositional bias: low complexity. The segment covering 130–143 (ATGTDNANNPSNAP) has biased composition (polar residues). 759–766 (GPNMGGKS) is an ATP binding site.

This sequence belongs to the DNA mismatch repair MutS family.

This protein is involved in the repair of mismatches in DNA. It is possible that it carries out the mismatch recognition step. This protein has a weak ATPase activity. This is DNA mismatch repair protein MutS from Psychrobacter cryohalolentis (strain ATCC BAA-1226 / DSM 17306 / VKM B-2378 / K5).